A 426-amino-acid chain; its full sequence is DNA polymerase processivity factor component OPG148 (426 aa).

It belongs to the orthopoxvirus OPG148 family. Interacts with the DNA polymerase catalytic subunit OPG071. Interacts with UDG/OPG116. Component of the uracil-DNA glycosylase(UDG)-OPG148-polymerase complex; OPG148 and UDG form a heterodimeric processivity factor that associates with OPG071 to form the processive polymerase holoenzyme. Interacts with OPG117.

Functionally, plays an essential role in viral DNA replication by acting as the polymerase processivity factor together with protein OPG116. Serves as a bridge which links the DNA polymerase OPG071 and the uracil DNA glycosylase. The polypeptide is DNA polymerase processivity factor component OPG148 (OPG148) (Cynomys gunnisoni (Gunnison's prairie dog)).